Reading from the N-terminus, the 430-residue chain is Histidinol dehydrogenase (430 aa).

Residues Tyr-130, Gln-191, and Asn-214 each coordinate NAD(+). Residues Ser-237, Gln-259, and His-262 each contribute to the substrate site. Residues Gln-259 and His-262 each coordinate Zn(2+). Residues Glu-327 and His-328 each act as proton acceptor in the active site. The substrate site is built by His-328, Asp-361, Glu-415, and His-420. Asp-361 serves as a coordination point for Zn(2+). A Zn(2+)-binding site is contributed by His-420.

The protein belongs to the histidinol dehydrogenase family. It depends on Zn(2+) as a cofactor.

The enzyme catalyses L-histidinol + 2 NAD(+) + H2O = L-histidine + 2 NADH + 3 H(+). It participates in amino-acid biosynthesis; L-histidine biosynthesis; L-histidine from 5-phospho-alpha-D-ribose 1-diphosphate: step 9/9. In terms of biological role, catalyzes the sequential NAD-dependent oxidations of L-histidinol to L-histidinaldehyde and then to L-histidine. In Brucella abortus (strain 2308), this protein is Histidinol dehydrogenase.